Here is a 287-residue protein sequence, read N- to C-terminus: Hydroxyethylthiazole kinase (287 aa).

Met-50 is a substrate binding site. Residues Arg-126 and Ser-185 each contribute to the ATP site. Residue Gly-212 participates in substrate binding.

It belongs to the Thz kinase family. The cofactor is Mg(2+).

It carries out the reaction 5-(2-hydroxyethyl)-4-methylthiazole + ATP = 4-methyl-5-(2-phosphooxyethyl)-thiazole + ADP + H(+). The protein operates within cofactor biosynthesis; thiamine diphosphate biosynthesis; 4-methyl-5-(2-phosphoethyl)-thiazole from 5-(2-hydroxyethyl)-4-methylthiazole: step 1/1. Its function is as follows. Catalyzes the phosphorylation of the hydroxyl group of 4-methyl-5-beta-hydroxyethylthiazole (THZ). This is Hydroxyethylthiazole kinase from Methanobrevibacter smithii (strain ATCC 35061 / DSM 861 / OCM 144 / PS).